The sequence spans 1305 residues: Cyclin-G-associated kinase (1305 aa).

Ser2 is modified (N-acetylserine). 2 positions are modified to phosphoserine: Ser2 and Ser16. One can recognise a Protein kinase domain in the interval 40 to 315 (LRVRRVLAEG…IAEVVRQLQE (276 aa)). Catalysis depends on Asp173, which acts as the Proton acceptor. Residues 332–354 (LEQNGGYGNSGPSRAQPPSGGPV) are disordered. Positions 397 to 564 (SVANYAKGDL…EYVCDMVAEE (168 aa)) constitute a Phosphatase tensin-type domain. At Ser454 the chain carries Phosphoserine. Residues 570-708 (SKPMLVKSVV…FQVNLEVEVE (139 aa)) form the C2 tensin-type domain. Residues 747-856 (FGKPELPRQP…TPRLAAGTRQ (110 aa)) are disordered. Residue Ser768 is modified to Phosphoserine. Thr774 bears the Phosphothreonine mark. The segment covering 776–789 (SDSPQSSSTDTNHF) has biased composition (polar residues). Ser781 carries the post-translational modification Phosphoserine. Thr792 bears the Phosphothreonine mark. A compositionally biased stretch (polar residues) spans 805 to 817 (VDNTSPKESQSNL). A phosphoserine mark is found at Ser809, Ser824, and Ser827. Residues 822-832 (DGSEVSDEEEA) show a composition bias toward acidic residues. Residues 836–848 (SEERKPGAGEDTP) are compositionally biased toward basic and acidic residues. Ser938 is subject to Phosphoserine. Residues 1044–1141 (LPGPASMPVP…PQAKPAPRAS (98 aa)) are disordered. Positions 1105-1131 (VGTSATTHKSNSSWQTTRPTAPGTSWP) are enriched in polar residues. Arg1122 is modified (omega-N-methylarginine). Position 1171 is a phosphoserine (Ser1171). Positions 1241–1305 (SRWTPVSMAD…FENQGSRPLF (65 aa)) constitute a J domain.

Belongs to the protein kinase superfamily. Ser/Thr protein kinase family.

Its subcellular location is the cytoplasm. It localises to the perinuclear region. The protein resides in the golgi apparatus. The protein localises to the trans-Golgi network. It is found in the cell junction. Its subcellular location is the focal adhesion. It localises to the cytoplasmic vesicle. The protein resides in the clathrin-coated vesicle. The enzyme catalyses L-seryl-[protein] + ATP = O-phospho-L-seryl-[protein] + ADP + H(+). The catalysed reaction is L-threonyl-[protein] + ATP = O-phospho-L-threonyl-[protein] + ADP + H(+). In terms of biological role, associates with cyclin G and CDK5. Seems to act as an auxilin homolog that is involved in the uncoating of clathrin-coated vesicles by Hsc70 in non-neuronal cells. Expression oscillates slightly during the cell cycle, peaking at G1. May play a role in clathrin-mediated endocytosis and intracellular trafficking, and in the dynamics of clathrin assembly/disassembly. This is Cyclin-G-associated kinase from Rattus norvegicus (Rat).